The chain runs to 1352 residues: Inhibitor of Bruton tyrosine kinase (1352 aa).

ANK repeat units lie at residues 51–80 (FGRN…DLLV) and 85–114 (SGWT…SLYM). 3 RCC1 repeats span residues 141 to 194 (PTEV…FLSQ), 195 to 246 (KGQV…VLTD), and 248 to 301 (GCVY…LWTR). A BTB 1 domain is found at 565–645 (HDVTFQVGNR…MYTDTCDLLT (81 aa)). A disordered region spans residues 692-716 (AHTLSERQKSKPKSSKKGKGVGDDD). Residues 701-710 (SKPKSSKKGK) are compositionally biased toward basic residues. Residues 769 to 837 (YDVTMKSVDG…LYTDEAVVIK (69 aa)) enclose the BTB 2 domain. The interval 976 to 1002 (FKKAKTRAKKKPRKRSDSSGGYTLSDV) is disordered. Over residues 977–989 (KKAKTRAKKKPRK) the composition is skewed to basic residues. Residue serine 991 is modified to Phosphoserine. Polar residues predominate over residues 993 to 1002 (SSGGYTLSDV). Serine 1005, serine 1031, serine 1034, serine 1040, serine 1046, serine 1055, serine 1084, serine 1111, serine 1113, and serine 1116 each carry phosphoserine. The tract at residues 1032 to 1094 (EGSYAGVASP…PTTKSAPQFI (63 aa)) is disordered. The span at 1084–1094 (SPTTKSAPQFI) shows a compositional bias: polar residues.

As to quaternary structure, interacts with the PH domain of BTK.

Its subcellular location is the cytoplasm. The protein resides in the membrane. Its function is as follows. Acts as an inhibitor of BTK tyrosine kinase activity, thereby playing a role in B-cell development. Down-regulates BTK kinase activity, leading to interference with BTK-mediated calcium mobilization and NF-kappa-B-driven transcription. This is Inhibitor of Bruton tyrosine kinase (Ibtk) from Mus musculus (Mouse).